The chain runs to 489 residues: Glucose-6-phosphate 1-dehydrogenase (489 aa).

NADP(+) is bound by residues 15–22 (GATGDLAK), R49, 86–87 (DV), and K149. Substrate is bound by residues H179, K183, E217, and D236. Catalysis depends on H241, which acts as the Proton acceptor. Positions 341 and 346 each coordinate substrate.

It belongs to the glucose-6-phosphate dehydrogenase family.

The enzyme catalyses D-glucose 6-phosphate + NADP(+) = 6-phospho-D-glucono-1,5-lactone + NADPH + H(+). Its pathway is carbohydrate degradation; pentose phosphate pathway; D-ribulose 5-phosphate from D-glucose 6-phosphate (oxidative stage): step 1/3. Functionally, catalyzes the oxidation of glucose 6-phosphate to 6-phosphogluconolactone. The chain is Glucose-6-phosphate 1-dehydrogenase from Bacillus subtilis (strain 168).